Reading from the N-terminus, the 154-residue chain is SsrA-binding protein (154 aa).

The protein belongs to the SmpB family.

The protein resides in the cytoplasm. Functionally, required for rescue of stalled ribosomes mediated by trans-translation. Binds to transfer-messenger RNA (tmRNA), required for stable association of tmRNA with ribosomes. tmRNA and SmpB together mimic tRNA shape, replacing the anticodon stem-loop with SmpB. tmRNA is encoded by the ssrA gene; the 2 termini fold to resemble tRNA(Ala) and it encodes a 'tag peptide', a short internal open reading frame. During trans-translation Ala-aminoacylated tmRNA acts like a tRNA, entering the A-site of stalled ribosomes, displacing the stalled mRNA. The ribosome then switches to translate the ORF on the tmRNA; the nascent peptide is terminated with the 'tag peptide' encoded by the tmRNA and targeted for degradation. The ribosome is freed to recommence translation, which seems to be the essential function of trans-translation. The sequence is that of SsrA-binding protein from Treponema denticola (strain ATCC 35405 / DSM 14222 / CIP 103919 / JCM 8153 / KCTC 15104).